Here is a 405-residue protein sequence, read N- to C-terminus: MSKLNPYFGEYGGMYVPQILMPALKQLETAFIEAQQDEAFQKEFTDLLKNYAGRPTALTLTRNLSPNPLAKIYLKREDLLHGGAHKTNQVLGQALLAKRMGKKEIIAETGAGQHGVATALACALLDLKCKVYMGAKDVERQSPNVFRMKLMGAEVIPVTSGSATLKDACNEAMRDWSASYDKAHYLLGTAAGPHPFPTIVREFQRMIGAETKQQILEREGRLPDAVIACVGGGSNAIGMFADFIDEEEVALIGVEPAGKGIDTPMHGAPLKHGKTGIFFGMKAPLMQDSEGQIEESYSVSAGLDFPSVGPQHAHLAATGRATYESATDDEALETFQLLARSEGIIPALESAHALAYAVKLAKAATKETLLVVNLSGRGDKDIFTVADILEKQQADSSTTEESGNE.

The residue at position 86 (Lys86) is an N6-(pyridoxal phosphate)lysine.

Belongs to the TrpB family. As to quaternary structure, tetramer of two alpha and two beta chains. Requires pyridoxal 5'-phosphate as cofactor.

It catalyses the reaction (1S,2R)-1-C-(indol-3-yl)glycerol 3-phosphate + L-serine = D-glyceraldehyde 3-phosphate + L-tryptophan + H2O. It functions in the pathway amino-acid biosynthesis; L-tryptophan biosynthesis; L-tryptophan from chorismate: step 5/5. Functionally, the beta subunit is responsible for the synthesis of L-tryptophan from indole and L-serine. This Shewanella piezotolerans (strain WP3 / JCM 13877) protein is Tryptophan synthase beta chain.